A 421-amino-acid polypeptide reads, in one-letter code: N-succinylarginine dihydrolase (421 aa).

Residues 19–28 (AGLSLGNLAS), Asn105, and 132–133 (HR) each bind substrate. Glu167 is a catalytic residue. Arg199 serves as a coordination point for substrate. Residue His235 is part of the active site. Residues Asp237 and Asn346 each contribute to the substrate site. Cys352 (nucleophile) is an active-site residue.

This sequence belongs to the succinylarginine dihydrolase family. As to quaternary structure, homodimer.

It carries out the reaction N(2)-succinyl-L-arginine + 2 H2O + 2 H(+) = N(2)-succinyl-L-ornithine + 2 NH4(+) + CO2. It functions in the pathway amino-acid degradation; L-arginine degradation via AST pathway; L-glutamate and succinate from L-arginine: step 2/5. Functionally, catalyzes the hydrolysis of N(2)-succinylarginine into N(2)-succinylornithine, ammonia and CO(2). This chain is N-succinylarginine dihydrolase, found in Novosphingobium aromaticivorans (strain ATCC 700278 / DSM 12444 / CCUG 56034 / CIP 105152 / NBRC 16084 / F199).